The sequence spans 203 residues: NADH-quinone oxidoreductase subunit C (203 aa).

The protein belongs to the complex I 30 kDa subunit family. In terms of assembly, NDH-1 is composed of 14 different subunits. Subunits NuoB, C, D, E, F, and G constitute the peripheral sector of the complex.

The protein localises to the cell inner membrane. It catalyses the reaction a quinone + NADH + 5 H(+)(in) = a quinol + NAD(+) + 4 H(+)(out). Its function is as follows. NDH-1 shuttles electrons from NADH, via FMN and iron-sulfur (Fe-S) centers, to quinones in the respiratory chain. The immediate electron acceptor for the enzyme in this species is believed to be ubiquinone. Couples the redox reaction to proton translocation (for every two electrons transferred, four hydrogen ions are translocated across the cytoplasmic membrane), and thus conserves the redox energy in a proton gradient. In Bartonella tribocorum (strain CIP 105476 / IBS 506), this protein is NADH-quinone oxidoreductase subunit C.